A 189-amino-acid chain; its full sequence is MSKVYTNFTVKGLTEQLNKGKVIVYPTESVFGLGCNPDNENAINTLLKIKCRSWKKGLILVAANYTQLFKYVDDRYLNSLQLSRIFSTWPGPFTWVFPARSSTPMWLTGKFSSVAIRVSNFEPIRRLCLTFGKPLVSTSANVSGYLPARTIHAVYKQLGYDFPIMNTNVLGLPNPSIIRDAITGKIIRK.

A YrdC-like domain is found at 7-189 (NFTVKGLTEQ…DAITGKIIRK (183 aa)).

The protein belongs to the SUA5 family. TsaC subfamily.

It localises to the cytoplasm. The enzyme catalyses L-threonine + hydrogencarbonate + ATP = L-threonylcarbamoyladenylate + diphosphate + H2O. Functionally, required for the formation of a threonylcarbamoyl group on adenosine at position 37 (t(6)A37) in tRNAs that read codons beginning with adenine. Catalyzes the conversion of L-threonine, HCO(3)(-)/CO(2) and ATP to give threonylcarbamoyl-AMP (TC-AMP) as the acyladenylate intermediate, with the release of diphosphate. This Blochmanniella floridana protein is Threonylcarbamoyl-AMP synthase.